A 230-amino-acid chain; its full sequence is Ribosomal RNA small subunit methyltransferase G (230 aa).

Residues G95, F100, 146 to 147 (GE), and R159 contribute to the S-adenosyl-L-methionine site.

Belongs to the methyltransferase superfamily. RNA methyltransferase RsmG family.

It is found in the cytoplasm. In terms of biological role, specifically methylates the N7 position of a guanine in 16S rRNA. The polypeptide is Ribosomal RNA small subunit methyltransferase G (Parabacteroides distasonis (strain ATCC 8503 / DSM 20701 / CIP 104284 / JCM 5825 / NCTC 11152)).